Consider the following 153-residue polypeptide: Probable phospholipase A2 homolog 2 (153 aa).

The first 25 residues, Met1–Gly25, serve as a signal peptide directing secretion. Disulfide bonds link Cys42–Cys70, Cys46–Cys76, Cys51–Cys123, Cys63–Cys83, Cys82–Cys109, and Cys89–Cys102. Positions 62, 64, and 67 each coordinate Ca(2+). His86 is an active-site residue. Asp87 provides a ligand contact to Ca(2+).

It belongs to the phospholipase A2 family. It depends on Ca(2+) as a cofactor.

The protein localises to the secreted. It catalyses the reaction a 1,2-diacyl-sn-glycero-3-phosphocholine + H2O = a 1-acyl-sn-glycero-3-phosphocholine + a fatty acid + H(+). In terms of biological role, PA2 catalyzes the calcium-dependent hydrolysis of the 2-acyl groups in 3-sn-phosphoglycerides. Releases lysophospholipids (LPLs) and free fatty acids (FFAs) from membrane phospholipids in response to hormones and other external stimuli. In Oryza sativa subsp. japonica (Rice), this protein is Probable phospholipase A2 homolog 2 (PLA2-II).